Consider the following 171-residue polypeptide: 3-hydroxydecanoyl-[acyl-carrier-protein] dehydratase (171 aa).

Residue His70 is part of the active site.

The protein belongs to the thioester dehydratase family. FabA subfamily. As to quaternary structure, homodimer.

The protein resides in the cytoplasm. It catalyses the reaction a (3R)-hydroxyacyl-[ACP] = a (2E)-enoyl-[ACP] + H2O. The enzyme catalyses (3R)-hydroxydecanoyl-[ACP] = (2E)-decenoyl-[ACP] + H2O. It carries out the reaction (2E)-decenoyl-[ACP] = (3Z)-decenoyl-[ACP]. Its pathway is lipid metabolism; fatty acid biosynthesis. In terms of biological role, necessary for the introduction of cis unsaturation into fatty acids. Catalyzes the dehydration of (3R)-3-hydroxydecanoyl-ACP to E-(2)-decenoyl-ACP and then its isomerization to Z-(3)-decenoyl-ACP. Can catalyze the dehydratase reaction for beta-hydroxyacyl-ACPs with saturated chain lengths up to 16:0, being most active on intermediate chain length. In Pseudoalteromonas translucida (strain TAC 125), this protein is 3-hydroxydecanoyl-[acyl-carrier-protein] dehydratase.